The sequence spans 432 residues: Adenylosuccinate synthetase (432 aa).

Residues 13–19 and 41–43 contribute to the GTP site; these read GDEGKGK and GHT. The Proton acceptor role is filled by D14. Mg(2+) contacts are provided by D14 and G41. IMP-binding positions include 14–17, 39–42, T130, R144, Q225, T240, and R304; these read DEGK and NAGH. H42 serves as the catalytic Proton donor. 300–306 is a binding site for substrate; sequence ATTGRRR. GTP contacts are provided by residues R306, 332–334, and 415–417; these read KLD and STG.

The protein belongs to the adenylosuccinate synthetase family. In terms of assembly, homodimer. The cofactor is Mg(2+).

It localises to the cytoplasm. The catalysed reaction is IMP + L-aspartate + GTP = N(6)-(1,2-dicarboxyethyl)-AMP + GDP + phosphate + 2 H(+). It participates in purine metabolism; AMP biosynthesis via de novo pathway; AMP from IMP: step 1/2. In terms of biological role, plays an important role in the de novo pathway of purine nucleotide biosynthesis. Catalyzes the first committed step in the biosynthesis of AMP from IMP. The polypeptide is Adenylosuccinate synthetase (Edwardsiella ictaluri (strain 93-146)).